Reading from the N-terminus, the 153-residue chain is MFTESMLFLLLFLLLGLIAKNNSLIIAVAVVILLKLFHVDGKVMEMVQAKGINWGVTIITVAILIPIATGQIGFKDLIDSFKSAAGWIGLGAGIAVSILAKKGVSYMAVDPQVTVSLVFGTILAVVLFRGIAAGPVIAAGIAYMAMQLVAFIK.

The next 4 membrane-spanning stretches (helical) occupy residues 6-26 (MLFL…SLII), 54-74 (WGVT…QIGF), 80-100 (SFKS…SILA), and 117-137 (LVFG…GPVI).

This sequence belongs to the UPF0756 family.

It localises to the cell membrane. This is UPF0756 membrane protein lwe1581 from Listeria welshimeri serovar 6b (strain ATCC 35897 / DSM 20650 / CCUG 15529 / CIP 8149 / NCTC 11857 / SLCC 5334 / V8).